We begin with the raw amino-acid sequence, 166 residues long: Protein BioX (166 aa).

5 consecutive transmembrane segments (helical) span residues Ile-12–Pro-32, Gly-33–Lys-53, Tyr-55–Leu-75, Val-87–Ile-107, and Ala-117–Ile-137.

It localises to the cell membrane. In terms of biological role, does not seem to be a permease of pimelate. Its role in biotin synthesis is not clear. This is Protein BioX (bioX) from Lysinibacillus sphaericus (Bacillus sphaericus).